Reading from the N-terminus, the 568-residue chain is Kelch-like protein 12 (568 aa).

One can recognise a BTB domain in the interval 33–100 (CDVTLRVEQK…VYTETVHVTV (68 aa)). The BACK domain maps to 135-236 (CLGIRDFAET…LTPRYITDVI (102 aa)). Kelch repeat units lie at residues 282-329 (VLLV…SLHD), 331-379 (IYVI…TLGD), 380-426 (MIYV…VASG), 427-473 (VIYC…LLND), 475-520 (IYVV…VLRG), and 522-567 (LYAI…VLRE). Residues 405–568 (QWSMLGDMQT…DAGVCVLREK (164 aa)) are interaction with DVL3.

Component of the BCR(KLHL12) E3 ubiquitin ligase complex, at least composed of CUL3 and KLHL12 and RBX1. This complex interacts with DVL3 upon activation of the Wnt signaling pathway by WNT3A. Interacts with DRD4, KLHL2 and SEC31A. Interacts with PEF1 and PDCD6/ALG-2; interaction takes place in response to cytosolic calcium increase and leads to bridge together the BCR(KLHL12) complex and SEC31 (SEC31A or SEC31B). Ubiquitinated by the SCF(FBXL17) complex, leading to its degradation by the proteasome: ubiquitination by the SCF(FBXL17) complex takes place when aberrant BTB domain dimers are formed. As to expression, ubiquitously expressed. Highly expressed in testis and at lower levels in the submandibular salivary gland.

It is found in the cytoplasmic vesicle. The protein localises to the COPII-coated vesicle. It functions in the pathway protein modification; protein ubiquitination. Its function is as follows. Substrate-specific adapter of a BCR (BTB-CUL3-RBX1) E3 ubiquitin ligase complex that acts as a negative regulator of Wnt signaling pathway and ER-Golgi transport. The BCR(KLHL12) complex is involved in ER-Golgi transport by regulating the size of COPII coats, thereby playing a key role in collagen export, which is required for embryonic stem (ES) cells division: BCR(KLHL12) acts by mediating monoubiquitination of SEC31 (SEC31A or SEC31B). The BCR(KLHL12) complex is also involved in neural crest specification: in response to cytosolic calcium increase, interacts with the heterodimer formed with PEF1 and PDCD6/ALG-2, leading to bridge together the BCR(KLHL12) complex and SEC31 (SEC31A or SEC31B), promoting monoubiquitination of SEC31 and subsequent collagen export. As part of the BCR(KLHL12) complex, also acts as a negative regulator of the Wnt signaling pathway by mediating ubiquitination and subsequent proteolysis of DVL3. The BCR(KLHL12) complex also mediates polyubiquitination of DRD4 and PEF1, without leading to degradation of these proteins. The protein is Kelch-like protein 12 (KLHL12) of Homo sapiens (Human).